A 144-amino-acid chain; its full sequence is TSC22 domain family protein 1 (144 aa).

Residues 77–98 (LKEQIKELIEKNSQLEQENNLL) form a leucine-zipper region. Positions 109–144 (QFQAQLQTGSPPATTQPQGTTQPPAQPASQGSGPTA) are disordered. Low complexity predominate over residues 115 to 144 (QTGSPPATTQPQGTTQPPAQPASQGSGPTA).

Belongs to the TSC-22/Dip/Bun family. In terms of assembly, forms homodimers. Forms a heterodimer with TSC22D4/THG1. Interacts with histone H1-2. Interacts with GNL3.

The protein resides in the cytoplasm. It localises to the nucleus. Its function is as follows. Transcriptional repressor. Plays a role in the repression of hematopoietic precursor cell growth. Promotes IL2 deprivation-induced apoptosis in T-lymphocytes, via repression of TSC22D3/GILZ transcription and activation of the caspase cascade. Positively regulates cell death in response to TGFB3 during mammary gland involution. In Bos taurus (Bovine), this protein is TSC22 domain family protein 1.